A 491-amino-acid chain; its full sequence is [Pyruvate dehydrogenase (acetyl-transferring)] kinase 2, mitochondrial (491 aa).

One can recognise a Histidine kinase domain in the interval 153–480 (PTIRTLEDAS…DVVLKLGNLM (328 aa)). ATP is bound by residues 300-307 (EILRNTYE), D341, 359-360 (SK), and 383-446 (DEVH…GIGL).

This sequence belongs to the PDK/BCKDK protein kinase family. In terms of assembly, interacts with PKP1.

The protein localises to the mitochondrion matrix. The catalysed reaction is L-seryl-[pyruvate dehydrogenase E1 alpha subunit] + ATP = O-phospho-L-seryl-[pyruvate dehydrogenase E1 alpha subunit] + ADP + H(+). Its function is as follows. Inhibits the mitochondrial pyruvate dehydrogenase complex by phosphorylation of the E1 alpha subunit (PDA1), thus contributing to the regulation of glucose metabolism. The chain is [Pyruvate dehydrogenase (acetyl-transferring)] kinase 2, mitochondrial from Saccharomyces cerevisiae (strain ATCC 204508 / S288c) (Baker's yeast).